Reading from the N-terminus, the 245-residue chain is 1-(5-phosphoribosyl)-5-[(5-phosphoribosylamino)methylideneamino] imidazole-4-carboxamide isomerase (245 aa).

The Proton acceptor role is filled by aspartate 7. Aspartate 129 acts as the Proton donor in catalysis.

Belongs to the HisA/HisF family.

It localises to the cytoplasm. The enzyme catalyses 1-(5-phospho-beta-D-ribosyl)-5-[(5-phospho-beta-D-ribosylamino)methylideneamino]imidazole-4-carboxamide = 5-[(5-phospho-1-deoxy-D-ribulos-1-ylimino)methylamino]-1-(5-phospho-beta-D-ribosyl)imidazole-4-carboxamide. Its pathway is amino-acid biosynthesis; L-histidine biosynthesis; L-histidine from 5-phospho-alpha-D-ribose 1-diphosphate: step 4/9. The sequence is that of 1-(5-phosphoribosyl)-5-[(5-phosphoribosylamino)methylideneamino] imidazole-4-carboxamide isomerase from Shewanella oneidensis (strain ATCC 700550 / JCM 31522 / CIP 106686 / LMG 19005 / NCIMB 14063 / MR-1).